Here is a 401-residue protein sequence, read N- to C-terminus: DNA damage checkpoint control protein RAD17 (401 aa).

Residues 367 to 393 (KKIKLPSEEENNKNRESEDEENHCKYP) form a disordered region. The span at 371-393 (LPSEEENNKNRESEDEENHCKYP) shows a compositional bias: basic and acidic residues. Ser-383 is subject to Phosphoserine.

Belongs to the rad1 family. Component of the checkpoint clamp complex composed of DDC1, MEC3 and RAD17. The interaction with MEC3 is performed in a RAD17-dependent manner. The checkpoint clamp complex loads onto DNA. Interacts with the DNA polymerase zeta subunit REV7. 2 RAD17 subunits also form a heterotrimer with one MEC3 subunit.

It localises to the nucleus. Component of the checkpoint clamp complex involved in the surveillance mechanism that allows the DNA repair pathways to act to restore the integrity of the DNA prior to DNA synthesis or separation of the replicated chromosomes. Associates with sites of DNA damage and modulates the MEC1 signaling pathway and the activation of RAD53 in response to DNA damage at phase G1. The complex also physically regulates DNA polymerase zeta-dependent mutagenesis by controlling the access of polymerase zeta to damaged DNA. Contrary to its human counterpart, the 9-1-1 complex, the checkpoint clamp complex shows no detectable exonuclease activity. The polypeptide is DNA damage checkpoint control protein RAD17 (RAD17) (Saccharomyces cerevisiae (strain ATCC 204508 / S288c) (Baker's yeast)).